Consider the following 329-residue polypeptide: NADH-quinone oxidoreductase subunit H (329 aa).

The next 9 helical transmembrane spans lie at 9-29 (LIKILILVAVFSALGGFATYI), 42-62 (GPCYVGPFGLLQVAADGIKLF), 75-95 (FIFTLAPIIAMVSAFVSMAPI), 117-137 (IGFLFFLAVGAAGIYAPILAG), 154-174 (IQLLSFEVVSTLTILAPLMVV), 188-208 (GGFLDWLVFKQPLAFVLFLIA), 238-258 (LKWGMFFLAEYAHLFAFSFVI), 269-291 (WGFIPGGIAILIKAGFFVFLSMW), and 309-329 (WKIMLPLALLNIVLTGIIILI).

It belongs to the complex I subunit 1 family. As to quaternary structure, NDH-1 is composed of 14 different subunits. Subunits NuoA, H, J, K, L, M, N constitute the membrane sector of the complex.

The protein resides in the cell inner membrane. The enzyme catalyses a quinone + NADH + 5 H(+)(in) = a quinol + NAD(+) + 4 H(+)(out). Functionally, NDH-1 shuttles electrons from NADH, via FMN and iron-sulfur (Fe-S) centers, to quinones in the respiratory chain. The immediate electron acceptor for the enzyme in this species is believed to be ubiquinone. Couples the redox reaction to proton translocation (for every two electrons transferred, four hydrogen ions are translocated across the cytoplasmic membrane), and thus conserves the redox energy in a proton gradient. This subunit may bind ubiquinone. This is NADH-quinone oxidoreductase subunit H from Helicobacter pylori (strain Shi470).